The sequence spans 159 residues: Putative 4-hydroxy-4-methyl-2-oxoglutarate aldolase (159 aa).

Residues 75-78 and arginine 97 each bind substrate; that span reads GDQL. Aspartate 98 contacts a divalent metal cation.

Belongs to the class II aldolase/RraA-like family. Homotrimer. A divalent metal cation is required as a cofactor.

The catalysed reaction is 4-hydroxy-4-methyl-2-oxoglutarate = 2 pyruvate. The enzyme catalyses oxaloacetate + H(+) = pyruvate + CO2. Catalyzes the aldol cleavage of 4-hydroxy-4-methyl-2-oxoglutarate (HMG) into 2 molecules of pyruvate. Also contains a secondary oxaloacetate (OAA) decarboxylase activity due to the common pyruvate enolate transition state formed following C-C bond cleavage in the retro-aldol and decarboxylation reactions. The protein is Putative 4-hydroxy-4-methyl-2-oxoglutarate aldolase of Aromatoleum aromaticum (strain DSM 19018 / LMG 30748 / EbN1) (Azoarcus sp. (strain EbN1)).